Consider the following 428-residue polypeptide: 3-phosphoshikimate 1-carboxyvinyltransferase (428 aa).

Positions 19, 20, and 24 each coordinate 3-phosphoshikimate. Lys-19 serves as a coordination point for phosphoenolpyruvate. Residues Gly-91 and Arg-119 each coordinate phosphoenolpyruvate. 3-phosphoshikimate-binding residues include Ser-164, Gln-166, Asp-312, and Lys-339. Phosphoenolpyruvate is bound at residue Gln-166. Residue Asp-312 is the Proton acceptor of the active site. Phosphoenolpyruvate-binding residues include Arg-343 and Arg-386.

Belongs to the EPSP synthase family. Monomer.

It is found in the cytoplasm. The catalysed reaction is 3-phosphoshikimate + phosphoenolpyruvate = 5-O-(1-carboxyvinyl)-3-phosphoshikimate + phosphate. Its pathway is metabolic intermediate biosynthesis; chorismate biosynthesis; chorismate from D-erythrose 4-phosphate and phosphoenolpyruvate: step 6/7. Functionally, catalyzes the transfer of the enolpyruvyl moiety of phosphoenolpyruvate (PEP) to the 5-hydroxyl of shikimate-3-phosphate (S3P) to produce enolpyruvyl shikimate-3-phosphate and inorganic phosphate. The polypeptide is 3-phosphoshikimate 1-carboxyvinyltransferase (Bacillus velezensis (strain DSM 23117 / BGSC 10A6 / LMG 26770 / FZB42) (Bacillus amyloliquefaciens subsp. plantarum)).